The primary structure comprises 292 residues: ATP synthase gamma chain (292 aa).

Belongs to the ATPase gamma chain family. In terms of assembly, F-type ATPases have 2 components, CF(1) - the catalytic core - and CF(0) - the membrane proton channel. CF(1) has five subunits: alpha(3), beta(3), gamma(1), delta(1), epsilon(1). CF(0) has three main subunits: a, b and c.

The protein resides in the cell inner membrane. Functionally, produces ATP from ADP in the presence of a proton gradient across the membrane. The gamma chain is believed to be important in regulating ATPase activity and the flow of protons through the CF(0) complex. In Syntrophobacter fumaroxidans (strain DSM 10017 / MPOB), this protein is ATP synthase gamma chain.